The following is a 1049-amino-acid chain: Retinoblastoma-like protein 1 (1049 aa).

T332, T369, and T385 each carry phosphothreonine. The tract at residues 385-584 is domain A; it reads TPVASATQSV…WEALRASANK (200 aa). The pocket; binds T and E1A stretch occupies residues 385 to 944; that stretch reads TPVASATQSV…GRVKSFALKY (560 aa). Residues 585–779 form a spacer region; it reads VPSCEEVIFP…TQDAPLTGIS (195 aa). Phosphoserine is present on residues S640, S650, S748, and S761. The domain B stretch occupies residues 780–944; the sequence is KPKRTGSLAL…GRVKSFALKY (165 aa). A phosphoserine mark is found at S959, S970, and S983. At T992 the chain carries Phosphothreonine. S1004 and S1022 each carry phosphoserine.

This sequence belongs to the retinoblastoma protein (RB) family. As to quaternary structure, component of the DREAM complex (also named LINC complex) at least composed of E2F4, E2F5, LIN9, LIN37, LIN52, LIN54, MYBL1, MYBL2, RBL1, RBL2, RBBP4, TFDP1 and TFDP2. The complex exists in quiescent cells where it represses cell cycle-dependent genes. It dissociates in S phase when LIN9, LIN37, LIN52 and LIN54 form a subcomplex that binds to MYBL2. Interacts with AATF. Interacts with KDM5A. Interacts with KMT5B and KMT5C. Interacts with USP4. Interacts with RBBP9. Post-translationally, cell-cycle arrest properties are inactivated by phosphorylation on Thr-332, Ser-640, Ser-959 and Ser-970 by CDK4.

It localises to the nucleus. Functionally, key regulator of entry into cell division. Directly involved in heterochromatin formation by maintaining overall chromatin structure and, in particular, that of constitutive heterochromatin by stabilizing histone methylation. Recruits and targets histone methyltransferases KMT5B and KMT5C, leading to epigenetic transcriptional repression. Controls histone H4 'Lys-20' trimethylation. Probably acts as a transcription repressor by recruiting chromatin-modifying enzymes to promoters. Potent inhibitor of E2F-mediated trans-activation. May act as a tumor suppressor. In Rattus norvegicus (Rat), this protein is Retinoblastoma-like protein 1.